We begin with the raw amino-acid sequence, 515 residues long: Aldehyde dehydrogenase tropH (515 aa).

G238–G243 lines the NAD(+) pocket. The active-site Proton acceptor is the E260. The active-site Nucleophile is the C295.

It belongs to the aldehyde dehydrogenase family.

The enzyme catalyses an aldehyde + NAD(+) + H2O = a carboxylate + NADH + 2 H(+). It functions in the pathway secondary metabolite biosynthesis. Functionally, aldehyde dehydrogenase; part of the gene cluster that mediates the biosynthesis of the tropolone class of fungal maleic anhydrides. The pathway begins with the synthesis of 3-methylorcinaldehyde by the non-reducing polyketide synthase (PKS) tropA. 3-methylorcinaldehyde is the substrate for the FAD-dependent monooxygenase tropB to yield a dearomatized hydroxycyclohexadione. The 2-oxoglutarate-dependent dioxygenase tropC then performs the oxidative ring expansion to provide the first tropolone metabolite stipitaldehyde. Trop D converts stipitaldehyde into stipitacetal which is in turn converted to stipitalide by the short-chain dehydrogenase/reductase tropE. The next steps involve tropF, tropG, tropH, tropI and tropJ to form successive tropolone maleic anhydrides including stipitaldehydic, stipitatonic and stipitatic acids. This Talaromyces stipitatus (strain ATCC 10500 / CBS 375.48 / QM 6759 / NRRL 1006) (Penicillium stipitatum) protein is Aldehyde dehydrogenase tropH.